The chain runs to 430 residues: Enolase (430 aa).

A (2R)-2-phosphoglycerate-binding site is contributed by Gln-163. The active-site Proton donor is Glu-205. Mg(2+)-binding residues include Asp-242, Glu-288, and Asp-315. 4 residues coordinate (2R)-2-phosphoglycerate: Lys-340, Arg-369, Ser-370, and Lys-391. Lys-340 (proton acceptor) is an active-site residue.

Belongs to the enolase family. The cofactor is Mg(2+).

Its subcellular location is the cytoplasm. It is found in the secreted. The protein resides in the cell surface. The enzyme catalyses (2R)-2-phosphoglycerate = phosphoenolpyruvate + H2O. It participates in carbohydrate degradation; glycolysis; pyruvate from D-glyceraldehyde 3-phosphate: step 4/5. Functionally, catalyzes the reversible conversion of 2-phosphoglycerate (2-PG) into phosphoenolpyruvate (PEP). It is essential for the degradation of carbohydrates via glycolysis. The chain is Enolase from Acidobacterium capsulatum (strain ATCC 51196 / DSM 11244 / BCRC 80197 / JCM 7670 / NBRC 15755 / NCIMB 13165 / 161).